The following is a 346-amino-acid chain: Tetraacyldisaccharide 4'-kinase (346 aa).

An ATP-binding site is contributed by 53–60; sequence TCGGTGKT.

The protein belongs to the LpxK family.

The catalysed reaction is a lipid A disaccharide + ATP = a lipid IVA + ADP + H(+). It functions in the pathway glycolipid biosynthesis; lipid IV(A) biosynthesis; lipid IV(A) from (3R)-3-hydroxytetradecanoyl-[acyl-carrier-protein] and UDP-N-acetyl-alpha-D-glucosamine: step 6/6. Transfers the gamma-phosphate of ATP to the 4'-position of a tetraacyldisaccharide 1-phosphate intermediate (termed DS-1-P) to form tetraacyldisaccharide 1,4'-bis-phosphate (lipid IVA). The protein is Tetraacyldisaccharide 4'-kinase of Bartonella tribocorum (strain CIP 105476 / IBS 506).